A 475-amino-acid chain; its full sequence is Ribulose bisphosphate carboxylase large chain (475 aa).

The propeptide occupies 1 to 2; the sequence is MS. At proline 3 the chain carries N-acetylproline. Position 14 is an N6,N6,N6-trimethyllysine (lysine 14). Asparagine 123 and threonine 173 together coordinate substrate. The active-site Proton acceptor is the lysine 175. Lysine 177 provides a ligand contact to substrate. The Mg(2+) site is built by lysine 201, aspartate 203, and glutamate 204. N6-carboxylysine is present on lysine 201. Residue histidine 294 is the Proton acceptor of the active site. Substrate is bound by residues arginine 295, histidine 327, and serine 379.

This sequence belongs to the RuBisCO large chain family. Type I subfamily. In terms of assembly, heterohexadecamer of 8 large chains and 8 small chains; disulfide-linked. The disulfide link is formed within the large subunit homodimers. Mg(2+) serves as cofactor. Post-translationally, the disulfide bond which can form in the large chain dimeric partners within the hexadecamer appears to be associated with oxidative stress and protein turnover.

The protein resides in the plastid. It is found in the chloroplast. It catalyses the reaction 2 (2R)-3-phosphoglycerate + 2 H(+) = D-ribulose 1,5-bisphosphate + CO2 + H2O. The catalysed reaction is D-ribulose 1,5-bisphosphate + O2 = 2-phosphoglycolate + (2R)-3-phosphoglycerate + 2 H(+). In terms of biological role, ruBisCO catalyzes two reactions: the carboxylation of D-ribulose 1,5-bisphosphate, the primary event in carbon dioxide fixation, as well as the oxidative fragmentation of the pentose substrate in the photorespiration process. Both reactions occur simultaneously and in competition at the same active site. This chain is Ribulose bisphosphate carboxylase large chain, found in Mesostigma viride (Green alga).